The following is a 167-amino-acid chain: Ubiquitin-fold modifier-conjugating enzyme 1 (167 aa).

Cysteine 116 serves as the catalytic Glycyl thioester intermediate.

Belongs to the ubiquitin-conjugating enzyme family. UFC1 subfamily. Interacts with UBA5 (via C-terminus). Interacts with UFL1. Interacts with UFM1.

Its function is as follows. E2-like enzyme which specifically catalyzes the second step in ufmylation. Accepts the ubiquitin-like modifier UFM1 from the E1 enzyme UBA5 and forms an intermediate with UFM1 via a thioester linkage. Ufmylation is involved in various processes, such as ribosome recycling, response to DNA damage, interferon response or reticulophagy (also called ER-phagy). In Esox lucius (Northern pike), this protein is Ubiquitin-fold modifier-conjugating enzyme 1.